Reading from the N-terminus, the 943-residue chain is Sodium- and chloride-dependent GABA transporter ine (943 aa).

Topologically, residues 1-345 (MAENKDVSQV…RQQHWANKMQ (345 aa)) are cytoplasmic. Positions 103-122 (HKQSPLRHTSVRTRPSSEVL) are disordered. 3 helical membrane passes run 346 to 366 (FVLACIGYSVGLGNVWRFPYM), 373 to 393 (GVFLVPYCIILFICSIPLLFM), and 418 to 438 (GAGLASVVVSFLMSTYYSVII). The Extracellular segment spans residues 439–510 (GYSIYYFFTS…GLEYPGMMRW (72 aa)). N-linked (GlcNAc...) asparagine glycosylation is present at Asn-476. The next 9 membrane-spanning stretches (helical) occupy residues 511–531 (ELFACLICAWLMVYFATWKSI), 539–559 (YFTATFPFVLIIILMVRAVTL), 591–607 (FNSLGITFGSMISFASY), 618–638 (TVAVSAVNMITSLLVGIFAFS), 679–699 (WAVMFFFMLLCLGLNSQFAIV), 723–743 (IVVLFVCVISCLFGMPNIIQG), 754–774 (YAASVTIMFLAFCQMIAIAWF), 799–819 (CWLVLGPCLLFAIWVLSLINY), and 836–856 (YGIGWMFASFSLICIPGYAVI). Over 857 to 943 (NFLRSSGDTF…HAEAGGPCGQ (87 aa)) the chain is Cytoplasmic.

Belongs to the sodium:neurotransmitter symporter (SNF) (TC 2.A.22) family. Expressed both maternally and zygotically. Developing embryos exhibit expression in the posterior hindgut, foregut, midgut, Malpighian tubules, anal plate, Garland cells, and a subset of cells in the central nervous system. Central nervous system expression is seen in segmentally repeating in cells flanking the midline of the ventral ganglion. Isoform A and isoform B are colocalized in both the nervous system and the fluid reabsorption system.

The protein localises to the membrane. Plays a role in neuronal membrane excitation, important for normal response properties of the photoreceptor. Able to control excitability from either neurons or glia cells. Ine negatively regulates neuronal sodium channels. Controls neurotransmitter-mediated signaling pathways associated with the structure of the larval peripheral nerve, ine and eag control perineurial glial growth through partially redundant pathways. Isoform A and isoform B are both functional, although isoform A functions with greater efficiency. Has a role in osmolyte transport within the Malpighian tubule and hindgut. This is Sodium- and chloride-dependent GABA transporter ine from Drosophila melanogaster (Fruit fly).